Reading from the N-terminus, the 309-residue chain is Calcium homeostasis modulator protein 5 (309 aa).

Residues 1–15 (MDAFQGILKFFLNQK) lie on the Cytoplasmic side of the membrane. K15, R32, and V37 together coordinate a 1,2-diacyl-sn-glycero-3-phosphate. Residues 16-37 (TVIGYSFMALLTVGSERLFSVV) form a helical membrane-spanning segment. At 38–45 (AFKCPCST) the chain is on the extracellular side. Disulfide bonds link C41-C127, C43-C158, and C142-C149. The chain crosses the membrane as a helical span at residues 46–70 (ENMTYGLVFLFAPAWVLLILGFFLN). Over 71–99 (NRSWRLFTGCCVNPRKIFPRGHSCRFFYV) the chain is Cytoplasmic. A helical membrane pass occupies residues 100–129 (LGQITLSSLVAPVMWLSVALLNGTFYECAM). 2 residues coordinate a 1,2-diacyl-sn-glycero-3-phosphate: Q102 and N121. The Extracellular segment spans residues 130-174 (SGTRSSGLLELICKGKPKECWEELHKVSCGKTSMLPTVNEELKLS). Residues 175-200 (LQAQSQILGWCLICSASFFSLLTTCY) form a helical membrane-spanning segment. The Cytoplasmic portion of the chain corresponds to 201–309 (ARCRSKVSYL…MVLVGTAHNM (109 aa)). R202 is a binding site for a 1,2-diacyl-sn-glycero-3-phosphate.

The protein belongs to the CALHM family. In terms of assembly, oligomerizes to form undecameric cone-shaped channels.

Its subcellular location is the membrane. Its function is as follows. May assemble to form large pore channels with gating and ion conductance likely regulated by membrane lipids. This chain is Calcium homeostasis modulator protein 5, found in Homo sapiens (Human).